The primary structure comprises 245 residues: Carbohydrate deacetylase 1 (245 aa).

Residues His-59 and His-125 each contribute to the Mg(2+) site.

The protein belongs to the YdjC deacetylase family. Homodimer. Mg(2+) serves as cofactor.

Functionally, probably catalyzes the deacetylation of acetylated carbohydrates an important step in the degradation of oligosaccharides. This is Carbohydrate deacetylase 1 from Listeria innocua serovar 6a (strain ATCC BAA-680 / CLIP 11262).